Here is a 284-residue protein sequence, read N- to C-terminus: uncharacterized protein (284 aa).

A C3H1-type zinc finger spans residues 37–65 (NEKKLICFSIINGENCIYGPNCTYAHSLS).

This is an uncharacterized protein from Acanthamoeba polyphaga (Amoeba).